The chain runs to 819 residues: LPS-assembly protein LptD (819 aa).

A signal peptide spans 1–33 (MRQMKYQFKFNPLAAAIFTLLCGGSMQSSYADA).

It belongs to the LptD family. In terms of assembly, component of the lipopolysaccharide transport and assembly complex. Interacts with LptE and LptA.

It localises to the cell outer membrane. Functionally, together with LptE, is involved in the assembly of lipopolysaccharide (LPS) at the surface of the outer membrane. This is LPS-assembly protein LptD from Acinetobacter baylyi (strain ATCC 33305 / BD413 / ADP1).